Consider the following 635-residue polypeptide: MRAFLLASLASLPAVNVYAHPTHNSRGLTRRAVDLDAFRPKVPTSYTNATAVQADPEIPTLARRADPEQVASELVAKILPDAQFRLVSDHYVGTNGVAHFYYKQTVHGLDVDSGDFNVNIGKDGNVFSFGNSFYKGKLPAAPTLKRDTEAAANALRSAVNVLSLPMSAESATAVPKEGSDAFTITQTSGAVKEPEARLVYVQDASGNLKLAWRVETDIQSNWLLTYVDAEDGSQVHAVVDYAAEATYEVYPWGISDPTEGERVVLTDPFDRQASEFGWHSDGTTEFNTTRGNNGLAHTNWENLSSGYLNFPRPSSADLKFEYPYSLEETDYKAYANASITQLYYTSNAYHDLLHTLGFNERAGNFEINNNGAGGRGGDLVYLNTQDGGGVNNANFLTPPDGQPPRMRMFIWTKTSPSRDSSFDAGVVIHEYTHGLSSRLTGGPANAGCLSSIESGGMGEGWSDFYATAIRLKPADTRATDYPMGAWIEGDSRGIRNFLYSTSMETNPQVYTNVDQYIRVHPIGNIWASMLYEVLWNLIDKHGKNDAAKPDFDANGVPTDGKYLTMKLVLDGMALQPCNPTFVSARDAIIDADKALTGGSNACEIWRGFAKRGLGAGARYDPTTRTDSFELPEGVC.

The N-terminal stretch at 1–19 (MRAFLLASLASLPAVNVYA) is a signal peptide. The propeptide occupies 20–244 (HPTHNSRGLT…VHAVVDYAAE (225 aa)). N-linked (GlcNAc...) asparagine glycans are attached at residues asparagine 287, asparagine 302, and asparagine 336. Zn(2+) is bound at residue histidine 429. The active site involves glutamate 430. Histidine 433 lines the Zn(2+) pocket.

It belongs to the peptidase M36 family. The cofactor is Zn(2+).

The protein localises to the secreted. Secreted metalloproteinase that allows assimilation of proteinaceous substrates. The protein is Extracellular metalloproteinase MEP (MEP) of Leptosphaeria maculans (strain JN3 / isolate v23.1.3 / race Av1-4-5-6-7-8) (Blackleg fungus).